Reading from the N-terminus, the 231-residue chain is NADH-ubiquinone oxidoreductase chain 4 (231 aa).

Helical transmembrane passes span 1-21 (PIAG…YGII), 34-54 (MFLP…LTCL), 61-80 (SLIA…AIII), 84-106 (WGLT…LFCL), 128-148 (ILPM…ATPP), and 169-189 (TIIL…HMFL).

It belongs to the complex I subunit 4 family.

The protein resides in the mitochondrion membrane. The enzyme catalyses a ubiquinone + NADH + 5 H(+)(in) = a ubiquinol + NAD(+) + 4 H(+)(out). Its function is as follows. Core subunit of the mitochondrial membrane respiratory chain NADH dehydrogenase (Complex I) that is believed to belong to the minimal assembly required for catalysis. Complex I functions in the transfer of electrons from NADH to the respiratory chain. The immediate electron acceptor for the enzyme is believed to be ubiquinone. The protein is NADH-ubiquinone oxidoreductase chain 4 (MT-ND4) of Atropoides picadoi (Picado's pit viper).